The following is a 486-amino-acid chain: ATP-dependent rRNA helicase RRP3 (486 aa).

The segment at 1–58 (MNGAKRRKVAQDTPRNTKPVAQEKPARAEPKPSSDEESEEESATLEEPSAEETAVDAP) is disordered. Basic and acidic residues predominate over residues 24–34 (KPARAEPKPSS). The span at 35-54 (DEESEEESATLEEPSAEETA) shows a compositional bias: acidic residues. The short motif at 60–88 (KTFKDLGVNDALCEACEKLNYKYPTPIQE) is the Q motif element. The region spanning 91–262 (IPVALQGRDI…RASLRDPVKV (172 aa)) is the Helicase ATP-binding domain. Position 104–111 (104–111 (AETGSGKT)) interacts with ATP. The short motif at 210–213 (DEAD) is the DEAD box element. In terms of domain architecture, Helicase C-terminal spans 286-434 (QKDVHLIYLI…EYPTEKEEVM (149 aa)). Composition is skewed to basic and acidic residues over residues 451 to 460 (MKSFTEERGK) and 476 to 486 (RGRDDMDREEG). A disordered region spans residues 451–486 (MKSFTEERGKKGSTLKGGRGKKGGKRGRDDMDREEG).

It belongs to the DEAD box helicase family. DDX47/RRP3 subfamily. In terms of assembly, interacts with the SSU processome.

It localises to the nucleus. It carries out the reaction ATP + H2O = ADP + phosphate + H(+). In terms of biological role, ATP-dependent rRNA helicase required for pre-ribosomal RNA processing. Involved in the maturation of the 35S-pre-rRNA and to its cleavage to mature 18S rRNA. The chain is ATP-dependent rRNA helicase RRP3 from Gibberella zeae (strain ATCC MYA-4620 / CBS 123657 / FGSC 9075 / NRRL 31084 / PH-1) (Wheat head blight fungus).